We begin with the raw amino-acid sequence, 284 residues long: Pseudouridine-5'-phosphate glycosidase (284 aa).

The Proton donor role is filled by glutamate 17. Positions 77 and 97 each coordinate substrate. Aspartate 126 contacts Mn(2+). 128 to 130 serves as a coordination point for substrate; that stretch reads SQD. Lysine 147 serves as the catalytic Nucleophile.

This sequence belongs to the pseudouridine-5'-phosphate glycosidase family. As to quaternary structure, homotrimer. Mn(2+) serves as cofactor.

The catalysed reaction is D-ribose 5-phosphate + uracil = psi-UMP + H2O. Catalyzes the reversible cleavage of pseudouridine 5'-phosphate (PsiMP) to ribose 5-phosphate and uracil. Functions biologically in the cleavage direction, as part of a pseudouridine degradation pathway. This chain is Pseudouridine-5'-phosphate glycosidase, found in Thermotoga neapolitana (strain ATCC 49049 / DSM 4359 / NBRC 107923 / NS-E).